A 267-amino-acid chain; its full sequence is Dynein axonemal assembly factor 19 homolog (267 aa).

Disordered regions lie at residues Ile86–Arg111 and His226–Cys250.

This sequence belongs to the DNAAF19/PR46b family. In terms of assembly, homodimer.

The protein localises to the cytoplasm. It localises to the cell projection. The protein resides in the cilium. It is found in the flagellum. Dynein-attachment factor required for cilia motility. The sequence is that of Dynein axonemal assembly factor 19 homolog (PR46b) from Chlamydomonas reinhardtii (Chlamydomonas smithii).